We begin with the raw amino-acid sequence, 466 residues long: UDP-N-acetylmuramoylalanine--D-glutamate ligase (466 aa).

115 to 121 provides a ligand contact to ATP; sequence GTDGKTT.

This sequence belongs to the MurCDEF family.

Its subcellular location is the cytoplasm. The enzyme catalyses UDP-N-acetyl-alpha-D-muramoyl-L-alanine + D-glutamate + ATP = UDP-N-acetyl-alpha-D-muramoyl-L-alanyl-D-glutamate + ADP + phosphate + H(+). It functions in the pathway cell wall biogenesis; peptidoglycan biosynthesis. Its function is as follows. Cell wall formation. Catalyzes the addition of glutamate to the nucleotide precursor UDP-N-acetylmuramoyl-L-alanine (UMA). This chain is UDP-N-acetylmuramoylalanine--D-glutamate ligase, found in Chlorobium phaeobacteroides (strain BS1).